The primary structure comprises 94 residues: Large ribosomal subunit protein bL31 (94 aa).

Residues Tyr65–Ser94 form a disordered region. Over residues Ser74–Ser94 the composition is skewed to basic and acidic residues.

This sequence belongs to the bacterial ribosomal protein bL31 family. Type A subfamily. As to quaternary structure, part of the 50S ribosomal subunit.

In terms of biological role, binds the 23S rRNA. This is Large ribosomal subunit protein bL31 from Prochlorococcus marinus (strain MIT 9211).